We begin with the raw amino-acid sequence, 990 residues long: Protein SUPPRESSOR OF MAX2 1 (990 aa).

The 160-residue stretch at 8-167 (IQQTLTPEAA…KATIEQSLNN (160 aa)) folds into the Clp R domain. 2 repeat regions span residues 12–83 (LTPE…LERL) and 96–167 (ISNA…SLNN). The tract at residues 818–855 (PKKEHGSGLSFDLNQAADTDDGSHNTSDLTTDNDQDEQ) is disordered. The short motif at 828 to 832 (FDLNQ) is the EAR element.

It belongs to the ClpA/ClpB family. In terms of assembly, interacts probably with TPL/TPR in an EAR-motif dependent manner. Interacts with TPL, TPR1, TPR2 and TPR4. As to expression, highly expressed in dry seeds. Expressed in seedlings, rosette leaves and senescing leaves. Detected in roots and axillary shoots. Expressed in the primary rosette buds and expanding leaves of adult rosettes, the vasculature of the hypocotyls, cotyledons, and mature roots, in the midvein and petioles of young leaves, the young leaf periphery, stomata, and the root caps.

Its function is as follows. Probable component of a transcriptional corepressor complex that acts downstream of MAX2 to negatively regulate karrikins/strigolactone responses. Probable target of MAX2 during germination and seedling photomorphogenesis. Acts probably specifically in the karrikin pathway. The chain is Protein SUPPRESSOR OF MAX2 1 from Arabidopsis thaliana (Mouse-ear cress).